The sequence spans 410 residues: Lissencephaly-1 homolog (410 aa).

Residues 7 to 39 enclose the LisH domain; it reads QRDELNRAIADYLRSNGYEEAYSVFKKEAELDM. Residues 56–82 adopt a coiled-coil conformation; it reads TSVIRLQKKVMELESKLNEAKEEFTSG. WD repeat units lie at residues 106-147, 148-187, 190-229, 232-271, 274-333, 336-377, and 379-410; these read GHRS…RTLK, GHTD…CIRT, GHDH…CVKT, GHRE…CKAE, EHEH…CLMT, GHDN…KTLN, and HEHF…WECR.

This sequence belongs to the WD repeat LIS1/nudF family. Can self-associate. Component of the cytosolic PAF-AH (I) heterotetrameric enzyme, which is composed of PAFAH1B1 (beta), PAFAH1B2 (alpha2) and PAFAH1B3 (alpha1) subunits. The catalytic activity of the enzyme resides in the alpha1 (PAFAH1B3) and alpha2 (PAFAH1B2) subunits, whereas the beta subunit (PAFAH1B1) has regulatory activity. Trimer formation is not essential for the catalytic activity. Interacts with dynein, dynactin, nde1 and ndel1.

It is found in the cytoplasm. The protein localises to the cytoskeleton. Its subcellular location is the microtubule organizing center. It localises to the centrosome. Its function is as follows. Regulatory subunit (beta subunit) of the cytosolic type I platelet-activating factor (PAF) acetylhydrolase (PAF-AH (I)), an enzyme that catalyzes the hydrolyze of the acetyl group at the sn-2 position of PAF and its analogs and participates in the PAF inactivation. Positively regulates the activity of the minus-end directed microtubule motor protein dynein. May enhance dynein-mediated microtubule sliding by targeting dynein to the microtubule plus end. Required for several dynein- and microtubule-dependent processes such as the maintenance of Golgi integrity, the peripheral transport of microtubule fragments and the coupling of the nucleus and centrosome. May be required for proliferation of neuronal precursors and neuronal migration. The polypeptide is Lissencephaly-1 homolog (pafah1b1) (Xenopus tropicalis (Western clawed frog)).